The chain runs to 690 residues: Eukaryotic translation initiation factor 3 subunit B (690 aa).

Residues 1-11 (MAKKKSEEHSG) show a composition bias toward basic and acidic residues. Residues 1-33 (MAKKKSEEHSGTDANDSDYQEEPNFDDPPGFVD) are disordered. Over residues 15–25 (NDSDYQEEPNF) the composition is skewed to acidic residues. In terms of domain architecture, RRM spans 57 to 141 (SVVVVDNIPK…HTFAVNLFTD (85 aa)). WD repeat units lie at residues 207–246 (TRER…KIQK), 293–331 (DGMS…LLDL), 334–369 (IKIP…TLME), 442–484 (EIRE…KPSL), and 530–575 (PDHF…IKRT). Residues 595 to 645 (EEKQKEIKKNLKKYYAAFEQKDRLRLTRASKELLEKRSQLRETFMEYRNKR) adopt a coiled-coil conformation.

This sequence belongs to the eIF-3 subunit B family. Component of the eukaryotic translation initiation factor 3 (eIF-3) complex. The eIF-3 complex interacts with pix. Interacts with mxt.

Its subcellular location is the cytoplasm. In terms of biological role, RNA-binding component of the eukaryotic translation initiation factor 3 (eIF-3) complex, which is involved in protein synthesis of a specialized repertoire of mRNAs and, together with other initiation factors, stimulates binding of mRNA and methionyl-tRNAi to the 40S ribosome. The eIF-3 complex specifically targets and initiates translation of a subset of mRNAs involved in cell proliferation. The chain is Eukaryotic translation initiation factor 3 subunit B from Drosophila melanogaster (Fruit fly).